The sequence spans 1857 residues: Ankyrin repeat domain-containing protein 31 (1857 aa).

Disordered stretches follow at residues 1-30 and 195-215; these read MENGAEASDCDSDETVIEGSVTENEPEDEE and SEPGEEVTQTMTSKETKDEES. Positions 195 to 207 are enriched in polar residues; it reads SEPGEEVTQTMTS. 3 ANK repeats span residues 475-504, 508-537, and 541-570; these read FGENLLYKAALHNDVDLVRCCIKNGENVNQ, DGWTALHEASIGGYYQAVSELLKGGADVNV, and YQITPLHDAVMNRHYKVAELLLMSGADPLF. The segment covering 676-691 has biased composition (polar residues); it reads KFGKSNLNSVKNSRTN. Disordered regions lie at residues 676–711, 813–844, 995–1038, 1046–1065, and 1075–1137; these read KFGKSNLNSVKNSRTNVSKRKGQKNRQQKKTQVDDR, VTTHQQPHTNQEQYSSPYKSLGNNSSNEKGKA, RDSS…TVVH, KAEKRREDLPGNEPINNTDF, and ANSS…QNFR. Residues 692–704 show a composition bias toward basic residues; it reads VSKRKGQKNRQQK. Over residues 814 to 839 the composition is skewed to polar residues; it reads TTHQQPHTNQEQYSSPYKSLGNNSSN. Basic and acidic residues predominate over residues 1008–1019; it reads SLERKQDTDKNY. Polar residues predominate over residues 1023–1032; it reads GPNTSSSSRP. The span at 1082 to 1136 shows a compositional bias: basic and acidic residues; the sequence is QRKEKENVRKSDAELTHNDSEAERTLKSCEEKKKNMDSETHSPCDIQEHRKDQNF. ANK repeat units follow at residues 1162 to 1191, 1195 to 1224, and 1228 to 1257; these read KGESQLHVAARGGNLSRVKVLIEARADVNL, AGWTPLHKAASGGFDDVIIELLQAGANVNC, and DGIVPLHGASAGNHLKAAEILLEHGANPNQ. Disordered regions lie at residues 1457–1479, 1540–1570, 1609–1640, and 1663–1697; these read NSDISSDKKSQEPPTMGDSAHAQ, GGLLRSKPTDDAEKIASSSQPAALTPHAENS, DPHSQKLSRCNPKRRNKKTASQQPSAGAAEPL, and AAAASHTDSTQSSLSSASAHQHPTKTVPHRNTTPR. The segment covering 1555 to 1570 has biased composition (polar residues); that stretch reads ASSSQPAALTPHAENS. Residues 1663–1683 show a composition bias toward low complexity; sequence AAAASHTDSTQSSLSSASAHQ. The 96-residue stretch at 1687 to 1782 folds into the RAMA domain; the sequence is KTVPHRNTTP…TYLGRELVKC (96 aa).

As to quaternary structure, interacts with REC114; the interaction is direct. Interacts with IHO1. Present in meiotic cells (at protein level).

It localises to the nucleus. The protein resides in the chromosome. Required for DNA double-strand breaks (DSBs) formation during meiotic recombination. Regulates the spatial and temporal patterns of pre-DSB recombinosome assembly and recombination activity by acting as a scaffold that anchors REC114 and other factors to specific genomic locations, thereby regulating DSB formation. Plays a key role in recombination in the pseudoautosomal regions of sex chromosomes. This Mus musculus (Mouse) protein is Ankyrin repeat domain-containing protein 31.